The primary structure comprises 256 residues: Imidazole glycerol phosphate synthase subunit HisF (256 aa).

Residues aspartate 11 and aspartate 130 contribute to the active site.

It belongs to the HisA/HisF family. In terms of assembly, heterodimer of HisH and HisF.

It is found in the cytoplasm. The enzyme catalyses 5-[(5-phospho-1-deoxy-D-ribulos-1-ylimino)methylamino]-1-(5-phospho-beta-D-ribosyl)imidazole-4-carboxamide + L-glutamine = D-erythro-1-(imidazol-4-yl)glycerol 3-phosphate + 5-amino-1-(5-phospho-beta-D-ribosyl)imidazole-4-carboxamide + L-glutamate + H(+). Its pathway is amino-acid biosynthesis; L-histidine biosynthesis; L-histidine from 5-phospho-alpha-D-ribose 1-diphosphate: step 5/9. Its function is as follows. IGPS catalyzes the conversion of PRFAR and glutamine to IGP, AICAR and glutamate. The HisF subunit catalyzes the cyclization activity that produces IGP and AICAR from PRFAR using the ammonia provided by the HisH subunit. This Prochlorococcus marinus (strain MIT 9215) protein is Imidazole glycerol phosphate synthase subunit HisF.